A 424-amino-acid polypeptide reads, in one-letter code: Enolase (424 aa).

Gln165 serves as a coordination point for (2R)-2-phosphoglycerate. Glu207 serves as the catalytic Proton donor. The Mg(2+) site is built by Asp244, Glu283, and Asp310. Lys335, Arg364, Ser365, and Lys386 together coordinate (2R)-2-phosphoglycerate. Catalysis depends on Lys335, which acts as the Proton acceptor.

The protein belongs to the enolase family. It depends on Mg(2+) as a cofactor.

The protein localises to the cytoplasm. It localises to the secreted. Its subcellular location is the cell surface. The enzyme catalyses (2R)-2-phosphoglycerate = phosphoenolpyruvate + H2O. It participates in carbohydrate degradation; glycolysis; pyruvate from D-glyceraldehyde 3-phosphate: step 4/5. Its function is as follows. Catalyzes the reversible conversion of 2-phosphoglycerate (2-PG) into phosphoenolpyruvate (PEP). It is essential for the degradation of carbohydrates via glycolysis. The sequence is that of Enolase from Chlamydia caviae (strain ATCC VR-813 / DSM 19441 / 03DC25 / GPIC) (Chlamydophila caviae).